The following is a 438-amino-acid chain: UDP-N-acetylmuramoylalanine--D-glutamate ligase (438 aa).

112 to 118 (GSNGKST) contributes to the ATP binding site.

The protein belongs to the MurCDEF family.

It localises to the cytoplasm. It carries out the reaction UDP-N-acetyl-alpha-D-muramoyl-L-alanine + D-glutamate + ATP = UDP-N-acetyl-alpha-D-muramoyl-L-alanyl-D-glutamate + ADP + phosphate + H(+). It participates in cell wall biogenesis; peptidoglycan biosynthesis. Its function is as follows. Cell wall formation. Catalyzes the addition of glutamate to the nucleotide precursor UDP-N-acetylmuramoyl-L-alanine (UMA). The sequence is that of UDP-N-acetylmuramoylalanine--D-glutamate ligase from Yersinia pseudotuberculosis serotype I (strain IP32953).